The sequence spans 324 residues: Beta-ketoacyl-[acyl-carrier-protein] synthase III (324 aa).

Residues C112 and H249 contribute to the active site. The ACP-binding stretch occupies residues 250–254; that stretch reads QANRR. The active site involves N279.

Belongs to the thiolase-like superfamily. FabH family. Homodimer.

Its subcellular location is the cytoplasm. The catalysed reaction is malonyl-[ACP] + acetyl-CoA + H(+) = 3-oxobutanoyl-[ACP] + CO2 + CoA. Its pathway is lipid metabolism; fatty acid biosynthesis. Catalyzes the condensation reaction of fatty acid synthesis by the addition to an acyl acceptor of two carbons from malonyl-ACP. Catalyzes the first condensation reaction which initiates fatty acid synthesis and may therefore play a role in governing the total rate of fatty acid production. Possesses both acetoacetyl-ACP synthase and acetyl transacylase activities. Its substrate specificity determines the biosynthesis of branched-chain and/or straight-chain of fatty acids. The chain is Beta-ketoacyl-[acyl-carrier-protein] synthase III from Streptococcus pyogenes serotype M49 (strain NZ131).